A 989-amino-acid chain; its full sequence is MSQWTPEFNELYTLKVAMKSGTPDAPTTQESLKAVLLHPQPLGATKSFPAEVEMINSKVGNEFSHLCDDSQKQEKDMTGNQQEQEKSGVVRKKRKSQQAGPSYVQNCVKENQEILGRRQQLETPSDEDNDSSLSECLSSPSSSLHFGGSDTVTSDEDKEVSVRHTQPVLSAKSRSHSARSHKWPRTEADPVPSLLMKRPCFHGSALRRVTCRKRLVKSSSSQRTQKQKERMLVQRKKREALAQRKYALLSSSSSSSENDLSSDSSSSSSTDGEEDLCASASENPSNPAAPSGSIDEDVVVIEASFTPQVTANEEINVTSTDSEVEIVTVGESYRSRSTLGHSRSHWSQGSSSHTGRPQESRNRSRISTVIQPLRQNAAEVVDLTVDEDEPTIVPTTSARMDSQTTSASINNSNPSTSEQASDTTSTVASSQPSTVSETEATLTSNSATGSSVGDDVRRTASSAVPESGPPAMPRLPSCCPQHSPCGGTSQSHHALAHPHSSCFQQHGHHFQHHHHHHHTPHPAVPVSPSFSDPACPVERPQVQAPCGANSSSGSSYHDQQALPVDLSNSALRTHGSGGFHGASAFDPCCPVTSSRAAVFGHQAAAAPTQPLSIDGYGSSMVAQPQPQPPPQPSLSSCRHYMPPPYASLTRPLHHQASACHHSHGNAPPQTQPPPQVDYVIPHPVHAFHSQISSHAASHPVAPPPPTHLGSTAAPIPQHLPPAHQPISHHIPAPAPSAQRLHPHEVMQRMEVQRRRMMQHPTRAHERPPPHPHRMHPNYGHGHHIHVPQTMSSHPRQAPERTAWELGIEAGVTAATYTPGALHPHLAHYHAPPRLHHLQLGALPLMVPDMAGYPHIRYISSGLDGASFRGPFRGNFEELIHLEERLGNVNRGASQGTIERCTYPHKYKKVTTDWFSQRKLHCKQDGEEGTEEDTEEKCTICLSILEEGEDVRRLPCMHLFHQVCVDQWLITNKKCPICRVDIEAQLPSES.

Residues Lys19, Lys33, Lys46, Lys58, Lys72, Lys86, Lys95, and Lys109 each participate in a glycyl lysine isopeptide (Lys-Gly) (interchain with G-Cter in SUMO2) cross-link. Residues 63–195 (FSHLCDDSQK…TEADPVPSLL (133 aa)) are disordered. The segment covering 65 to 88 (HLCDDSQKQEKDMTGNQQEQEKSG) has biased composition (basic and acidic residues). A compositionally biased stretch (polar residues) spans 97 to 109 (QQAGPSYVQNCVK). Residues 110-120 (ENQEILGRRQQ) are compositionally biased toward basic and acidic residues. Residues 131-144 (SSLSECLSSPSSSL) are compositionally biased toward low complexity. Lys172 participates in a covalent cross-link: Glycyl lysine isopeptide (Lys-Gly) (interchain with G-Cter in SUMO2). Residues 173–183 (SRSHSARSHKW) are compositionally biased toward basic residues. Glycyl lysine isopeptide (Lys-Gly) (interchain with G-Cter in SUMO2) cross-links involve residues Lys197 and Lys217. Residues 213-293 (KRLVKSSSSQ…PSNPAAPSGS (81 aa)) form a disordered region. The interaction with AXIN1 stretch occupies residues 240–402 (ALAQRKYALL…VPTTSARMDS (163 aa)). 2 stretches are compositionally biased toward low complexity: residues 248-270 (LLSS…SSST) and 278-291 (ASAS…AAPS). Residues 298–302 (VVVIE) carry the SUMO interaction motif 1 (SIM) motif. An SUMO interaction motif 2 (SIM) motif is present at residues 323-329 (EVEIVTV). Residues 335–367 (SRSTLGHSRSHWSQGSSSHTGRPQESRNRSRIS) are disordered. Positions 345–355 (HWSQGSSSHTG) are enriched in low complexity. An SUMO interaction motif 3 (SIM) motif is present at residues 380–384 (VVDLT). Disordered regions lie at residues 388-475 (DEPT…MPRL), 506-559 (HGHH…YHDQ), and 641-675 (MPPP…PPPQ). The span at 393–451 (VPTTSARMDSQTTSASINNSNPSTSEQASDTTSTVASSQPSTVSETEATLTSNSATGSS) shows a compositional bias: polar residues. A compositionally biased stretch (basic residues) spans 506–520 (HGHHFQHHHHHHHTP). Residues 548–558 (ANSSSGSSYHD) show a composition bias toward polar residues. Positions 902–904 (YPH) are ubiquitin binding. Residues Lys918 and Lys922 each participate in a glycyl lysine isopeptide (Lys-Gly) (interchain with G-Cter in SUMO2) cross-link. The Zn(2+) site is built by Cys937 and Cys940. The RING-type; atypical zinc finger occupies 937–978 (CTICLSILEEGEDVRRLPCMHLFHQVCVDQWLITNKKCPICR). The interval 952-956 (RLPCM) is ubiquitin binding. 2 residues coordinate Zn(2+): His960 and Cys963.

Belongs to the Arkadia family. Monomer. Interacts with SMAD6, SMAD7, AXIN1, AXIN2 and SKIL isoform SNON. Interacts with (phosphorylated) SMAD2 and SMAD3. Part of a complex containing RNF111, AXIN1 and SMAD7. Interacts (via SIM domains) with SUMO1 and SUMO2. In terms of tissue distribution, ubiquitously expressed.

Its subcellular location is the nucleus. The protein localises to the cytoplasm. It localises to the PML body. It carries out the reaction S-ubiquitinyl-[E2 ubiquitin-conjugating enzyme]-L-cysteine + [acceptor protein]-L-lysine = [E2 ubiquitin-conjugating enzyme]-L-cysteine + N(6)-ubiquitinyl-[acceptor protein]-L-lysine.. It participates in protein modification; protein ubiquitination. With respect to regulation, binds free ubiquitin non-covalently via its RING-type zinc finger. Ubiquitin-binding leads to enhance the E3 ubiquitin-protein ligase activity by stabilizing the ubiquitin-conjugating enzyme E2 (donor ubiquitin) in the 'closed' conformation and activating ubiquitin transfer. E3 ubiquitin-protein ligase required for mesoderm patterning during embryonic development. Acts as an enhancer of the transcriptional responses of the SMAD2/SMAD3 effectors, which are activated downstream of BMP. Acts by mediating ubiquitination and degradation of SMAD inhibitors such as SMAD7, inducing their proteasomal degradation and thereby enhancing the transcriptional activity of TGF-beta and BMP. In addition to enhance transcription of SMAD2/SMAD3 effectors, also regulates their turnover by mediating their ubiquitination and subsequent degradation, coupling their activation with degradation, thereby ensuring that only effectors 'in use' are degraded. Activates SMAD3/SMAD4-dependent transcription by triggering signal-induced degradation of SNON isoform of SKIL. Associates with UBE2D2 as an E2 enzyme. Specifically binds polysumoylated chains via SUMO interaction motifs (SIMs) and mediates ubiquitination of sumoylated substrates. Catalyzes 'Lys-63'-linked ubiquitination of sumoylated XPC in response to UV irradiation, promoting nucleotide excision repair. Mediates ubiquitination and degradation of sumoylated PML. The regulation of the BMP-SMAD signaling is however independent of sumoylation and is not dependent of SUMO interaction motifs (SIMs). This Mus musculus (Mouse) protein is E3 ubiquitin-protein ligase Arkadia.